We begin with the raw amino-acid sequence, 751 residues long: Zinc finger protein 184 (751 aa).

Residues 28–99 (VTFKDVIVDF…EPSIPVGTCA (72 aa)) form the KRAB domain. Phosphoserine is present on residues Ser117, Ser122, and Ser199. Polar residues predominate over residues 191–202 (SNLVTQEPSPEE). The interval 191-212 (SNLVTQEPSPEETSTKRSIKQN) is disordered. Lys206 is covalently cross-linked (Glycyl lysine isopeptide (Lys-Gly) (interchain with G-Cter in SUMO2)). 19 consecutive C2H2-type zinc fingers follow at residues 222-244 (CKCNECGKAFSYCSALIRHQRTH), 250-272 (YKCNECEKAFSRSENLINHQRIH), 278-300 (YKCDQCGKGFIEGPSLTQHQRIH), 306-328 (YKCDECGKAFSQRTHLVQHQRIH), 334-356 (YTCNECGKAFSQRGHFMEHQKIH), 362-384 (FKCDECDKTFTRSTHLTQHQKIH), 390-412 (YKCNECGKAFNGPSTFIRHHMIH), 418-440 (YECNECGKAFSQHSNLTQHQKTH), 446-468 (YDCAECGKSFSYWSSLAQHLKIH), 474-496 (YKCNECGKAFSYCSSLTQHRRIH), 502-524 (FECSECGKAFSYLSNLNQHQKTH), 530-552 (YECKECGKAFIRSSSLAKHERIH), 558-580 (YQCHECGKTFSYGSSLIQHRKIH), 586-608 (YKCNECGRAFNQNIHLTQHKRIH), 614-636 (YECAECGKAFRHCSSLAQHQKTH), 642-664 (YQCNKCEKTFSQSSHLTQHQRIH), 670-692 (YKCNECDKAFSRSTHLTEHQNTH), 698-720 (YNCNECRKTFSQSTYLIQHQRIH), and 726-748 (FGCNDCGKSFRYRSALNKHQRLH).

This sequence belongs to the krueppel C2H2-type zinc-finger protein family. In terms of tissue distribution, predominant expression in testis.

The protein localises to the nucleus. Its function is as follows. May be involved in transcriptional regulation. The sequence is that of Zinc finger protein 184 (ZNF184) from Homo sapiens (Human).